We begin with the raw amino-acid sequence, 635 residues long: Dual specificity protein kinase zak2 (635 aa).

2 consecutive Protein kinase domains span residues 9–249 (WEEI…HRLI) and 299–585 (NKDD…QIYF). Residues 15-23 (IGSCNSKSR) and K45 contribute to the ATP site. Residue D124 is the Proton acceptor of the active site. Residues 305-313 (GGDGFFSVV) and K326 contribute to the ATP site. D427 serves as the catalytic Proton acceptor.

It in the N-terminal section; belongs to the protein kinase superfamily. Ser/Thr protein kinase family. The protein in the C-terminal section; belongs to the protein kinase superfamily. TKL Tyr protein kinase family. In terms of processing, C-terminal tyrosine kinase domain is capable of autophosphorylation, in vitro. As to expression, zakA and zak2 are coexpressed in prestalk cell population, zakA is enriched in pstB populations and zak1 in pstA populations. ZakA and zak2 are coexpressed in prespore cells, zakA expression levels are 10 fold higher than zak2.

It catalyses the reaction L-seryl-[protein] + ATP = O-phospho-L-seryl-[protein] + ADP + H(+). The catalysed reaction is L-threonyl-[protein] + ATP = O-phospho-L-threonyl-[protein] + ADP + H(+). The enzyme catalyses L-tyrosyl-[protein] + ATP = O-phospho-L-tyrosyl-[protein] + ADP + H(+). In terms of biological role, positive regulator of gsk3/gskA activity required for cell pattern formation and a downstream effector of carC. The kinases, gsk3/gskA, zakA and zak2, form part of a signaling pathway that responds to extracellular cyclic AMP. The pathway has a role in transcriptional regulation; required to direct prespore/spore fates during development. Zak2 negatively regulates prestalk differentiation by regulating expression of ecmA. Phosphorylates Y-214 of gsk3/gskA, in vitro. The sequence is that of Dual specificity protein kinase zak2 (zak2) from Dictyostelium discoideum (Social amoeba).